Here is a 236-residue protein sequence, read N- to C-terminus: Ubiquitin carboxyl-terminal hydrolase YUH1 (236 aa).

Residues 7-233 (AVVPIESNPE…LNFAMLGLGP (227 aa)) form the UCH catalytic domain. The tract at residues 10-15 (PIESNP) is interaction with ubiquitin. Residue Cys-90 is the Nucleophile of the active site. Residues 149–157 (FSTGQSEAP) are interaction with ubiquitin. His-166 functions as the Proton donor in the catalytic mechanism. The tract at residues 219–228 (NEEDVLNFAM) is interaction with ubiquitin.

The protein belongs to the peptidase C12 family.

The catalysed reaction is Thiol-dependent hydrolysis of ester, thioester, amide, peptide and isopeptide bonds formed by the C-terminal Gly of ubiquitin (a 76-residue protein attached to proteins as an intracellular targeting signal).. In terms of biological role, deubiquitinating enzyme (DUB) that controls levels of cellular ubiquitin through processing of ubiquitin precursors and ubiquitinated proteins. Thiol protease that recognizes and hydrolyzes a peptide bond at the C-terminal glycine of either ubiquitin or RUB1. Preferentially cleaves ubiquitin from peptides and small adducts. This chain is Ubiquitin carboxyl-terminal hydrolase YUH1 (YUH1), found in Saccharomyces cerevisiae (strain ATCC 204508 / S288c) (Baker's yeast).